The following is a 221-amino-acid chain: Deoxyribose-phosphate aldolase (221 aa).

The active-site Proton donor/acceptor is Asp90. Lys152 serves as the catalytic Schiff-base intermediate with acetaldehyde. Lys181 functions as the Proton donor/acceptor in the catalytic mechanism.

This sequence belongs to the DeoC/FbaB aldolase family. DeoC type 1 subfamily.

It localises to the cytoplasm. It catalyses the reaction 2-deoxy-D-ribose 5-phosphate = D-glyceraldehyde 3-phosphate + acetaldehyde. It functions in the pathway carbohydrate degradation; 2-deoxy-D-ribose 1-phosphate degradation; D-glyceraldehyde 3-phosphate and acetaldehyde from 2-deoxy-alpha-D-ribose 1-phosphate: step 2/2. Functionally, catalyzes a reversible aldol reaction between acetaldehyde and D-glyceraldehyde 3-phosphate to generate 2-deoxy-D-ribose 5-phosphate. In Syntrophotalea carbinolica (strain DSM 2380 / NBRC 103641 / GraBd1) (Pelobacter carbinolicus), this protein is Deoxyribose-phosphate aldolase.